Consider the following 244-residue polypeptide: Type I iodothyronine deiodinase (244 aa).

The Extracellular portion of the chain corresponds to 1-12 (MGLSQLGLWLRR). A helical; Signal-anchor for type III membrane protein transmembrane segment spans residues 13–33 (LWVLFQVALQVAVGKVFLILF). At 34 to 244 (PSRVKQHIVA…VRAVLEKLHS (211 aa)) the chain is on the cytoplasmic side. Residue Sec121 is part of the active site. Residue Sec121 is a non-standard amino acid, selenocysteine.

This sequence belongs to the iodothyronine deiodinase family. In terms of assembly, predominantly monomer. Can form homodimers but homodimerization is not essential for enzyme activity.

It localises to the cell membrane. It is found in the endoplasmic reticulum membrane. Its subcellular location is the basolateral cell membrane. The catalysed reaction is 3,3',5-triiodo-L-thyronine + iodide + A + H(+) = L-thyroxine + AH2. It catalyses the reaction 3,3',5'-triiodo-L-thyronine + iodide + A + H(+) = L-thyroxine + AH2. The enzyme catalyses 3,3'-diiodo-L-thyronine + iodide + A + H(+) = 3,3',5'-triiodo-L-thyronine + AH2. It carries out the reaction 3,3'-diiodo-L-thyronine + iodide + A + H(+) = 3,3',5-triiodo-L-thyronine + AH2. The catalysed reaction is 3'-iodo-L-thyronine + iodide + A + H(+) = 3',5'-diiodo-L-thyronine + AH2. It catalyses the reaction 3-iodo-L-thyronine + iodide + A + H(+) = 3,5-diiodo-L-thyronine + AH2. The enzyme catalyses 3-iodo-L-thyronine + iodide + A + H(+) = 3,3'-diiodo-L-thyronine + AH2. It carries out the reaction 3,3'-diiodothyronamine + iodide + A + H(+) = 3,3',5'-triiodothyronamine + AH2. The catalysed reaction is 3'-iodothyronamine + iodide + A + H(+) = 3',5'-diiodothyronamine + AH2. It catalyses the reaction 3-iodothyronamine + iodide + A + H(+) = 3,3'-diiodothyronamine + AH2. The enzyme catalyses 3,3'-diiodothyronamine + iodide + A + H(+) = 3,3',5-triiodothyronamine + AH2. It carries out the reaction 3-iodothyronamine + iodide + A + H(+) = 3,5-diiodothyronamine + AH2. The catalysed reaction is 3,3'-diiodo-L-thyronine sulfate + iodide + A + H(+) = 3,3',5'-triiodo-L-thyronine sulfate + AH2. It catalyses the reaction 3,3',5'-triiodo-L-thyronine sulfate + iodide + A + H(+) = L-thyroxine sulfate + AH2. The enzyme catalyses 3,3'-diiodo-L-thyronine sulfate + iodide + A + H(+) = 3,3',5-triiodo-L-thyronine sulfate + AH2. Its function is as follows. Plays a crucial role in the metabolism of thyroid hormones (TH) and has specific roles in TH activation and inactivation by deiodination. Catalyzes the deiodination of L-thyroxine (T4) to 3,5,3'-triiodothyronine (T3) and 3',5'-diiodothyronine (3',5'-T2) to 3'-monoiodothyronine (3'-T1) via outer-ring deiodination (ORD). Catalyzes the deiodination of T4 to 3,3',5'-triiodothyronine (rT3), T3 to 3,3'-diiodothyronine (3,3'-T2), 3,5-diiodothyronine (3,5-T2) to 3-monoiodothyronine (3-T1) and 3,3'-T2 to 3-T1 via inner-ring deiodination (IRD). Catalyzes the deiodination of rT3 to 3,3'-T2 via ORD. Catalyzes the phenolic ring deiodinations of 3,3',5'-triiodothyronamine, 3',5'-diiodothyronamine and 3,3'-diiodothyronamine as well as tyrosyl ring deiodinations of 3,5,3'-triiodothyronamine and 3,5-diiodothyronamine. Catalyzes the deiodination of L-thyroxine sulfate and 3,3',5-triiodo-L-thyronine sulfate via IRD and of 3,3',5'-triiodo-L-thyronine sulfate via ORD. The sequence is that of Type I iodothyronine deiodinase (DIO1) from Felis catus (Cat).